A 263-amino-acid chain; its full sequence is Ycf3-interacting protein 1, chloroplastic (263 aa).

Residues 1 to 71 constitute a chloroplast transit peptide; the sequence is MASNMLQLSL…VNKEEDSATY (71 aa). A helical membrane pass occupies residues 238–258; sequence ALYLVSAFPIIIGISVVLILF.

This sequence belongs to the Y3IP1/CEST family. Interacts with Ycf3.

It localises to the plastid. Its subcellular location is the chloroplast thylakoid membrane. Functionally, nuclear genome-encoded factor that participates in photosystem I (PSI) biogenesis. Cooperates with the plastid genome-encoded protein PSI assembly Ycf3 in the assembly of stable PSI units in the thylakoid membrane. The sequence is that of Ycf3-interacting protein 1, chloroplastic from Nicotiana tabacum (Common tobacco).